Consider the following 1613-residue polypeptide: THO complex subunit 2 (1613 aa).

2 coiled-coil regions span residues 293-339 (NSIM…KVEK) and 896-965 (HTSY…NWLL). The Nuclear localization signal signature appears at 923–928 (KKKKEK). The disordered stretch occupies residues 1182-1586 (PENEFHNKDP…GGKEEKKQYP (405 aa)). A compositionally biased stretch (basic and acidic residues) spans 1218–1234 (KSDESSTEETDKSRERS). Phosphoserine is present on serine 1222. Low complexity predominate over residues 1251 to 1262 (GNSSNGNSGSNS). 3 stretches are compositionally biased toward basic and acidic residues: residues 1264-1284 (AVKE…KEKT), 1293-1342 (VLGK…EKFK), and 1352-1382 (STQE…KGGE). Phosphothreonine is present on threonine 1384. Residues serine 1389, serine 1392, and serine 1416 each carry the phosphoserine modification. Residues 1415–1424 (PSPSHSSTVK) are compositionally biased toward polar residues. Phosphothreonine is present on threonine 1442. Basic and acidic residues predominate over residues 1448 to 1503 (KSKEREMDKKDLDKSRERSREREKKDEKDRKERKRDHSNNDREVPPDLTKRRKEEN). Residues serine 1449, serine 1485, and serine 1515 each carry the phosphoserine modification. Residues 1464-1491 (ERSREREKKDEKDRKERKRDHSNNDREV) are a coiled coil. Residues 1523 to 1584 (NEKDKEKNKS…SSGGKEEKKQ (62 aa)) are compositionally biased toward basic and acidic residues.

It belongs to the THOC2 family. In terms of assembly, component of the THO subcomplex, which is composed of THOC1, THOC2, THOC3, THOC5, THOC6 and THOC7. The THO subcomplex interacts with DDX39B to form the THO-DDX39B complex which multimerizes into a 28-subunit tetrameric assembly. Component of the transcription/export (TREX) complex at least composed of ALYREF/THOC4, DDX39B, SARNP/CIP29, CHTOP and the THO subcomplex; in the complex interacts with THOC1, THOC3, THOC5, THOC7 and DDX39B. TREX seems to have a dynamic structure involving ATP-dependent remodeling. Interacts with POLDIP3 and ZC3H11A.

It localises to the nucleus. The protein resides in the nucleus speckle. Its subcellular location is the cytoplasm. In terms of biological role, component of the THO subcomplex of the TREX complex which is thought to couple mRNA transcription, processing and nuclear export, and which specifically associates with spliced mRNA and not with unspliced pre-mRNA. Required for efficient export of polyadenylated RNA and spliced mRNA. The THOC1-THOC2-THOC3 core complex alone is sufficient to bind export factor NXF1-NXT1 and promote ATPase activity of DDX39B; in the complex THOC2 is the only component that directly interacts with DDX39B. TREX is recruited to spliced mRNAs by a transcription-independent mechanism, binds to mRNA upstream of the exon-junction complex (EJC) and is recruited in a splicing- and cap-dependent manner to a region near the 5' end of the mRNA where it functions in mRNA export to the cytoplasm via the TAP/NXF1 pathway. Required for NXF1 localization to the nuclear rim. THOC2 (and probably the THO complex) is involved in releasing mRNA from nuclear speckle domains. Plays a role for proper neuronal development. The sequence is that of THO complex subunit 2 (THOC2) from Dasypus novemcinctus (Nine-banded armadillo).